Consider the following 751-residue polypeptide: Semaphorin-3C (751 aa).

The signal sequence occupies residues 1–20 (MAFRAICVLVGVFICSICVR). The 484-residue stretch at 28–511 (RVYLTFDELR…SNEGVSQVSL (484 aa)) folds into the Sema domain. An N-linked (GlcNAc...) asparagine glycan is attached at asparagine 81. A disulfide bridge connects residues cysteine 101 and cysteine 112. N-linked (GlcNAc...) asparagine glycosylation occurs at asparagine 123. Cysteine 130 and cysteine 139 are oxidised to a cystine. Residues asparagine 252 and asparagine 268 are each glycosylated (N-linked (GlcNAc...) asparagine). Cystine bridges form between cysteine 266–cysteine 378 and cysteine 290–cysteine 338. The N-linked (GlcNAc...) asparagine glycan is linked to asparagine 465. Cysteine 514 and cysteine 532 form a disulfide bridge. Positions 571-655 (AYRNAAEIVQ…TENSFKQTIA (85 aa)) constitute an Ig-like C2-type domain. Residues asparagine 585 and asparagine 586 are each glycosylated (N-linked (GlcNAc...) asparagine). Cysteines 643 and 709 form a disulfide.

It belongs to the semaphorin family. In terms of assembly, interacts with PLXND1.

The protein resides in the secreted. In terms of biological role, binds to plexin family members and plays an important role in the regulation of developmental processes. Required for normal cardiovascular development during embryogenesis. Functions as attractant for growing axons, and thereby plays an important role in axon growth and axon guidance. In Mus musculus (Mouse), this protein is Semaphorin-3C (Sema3c).